A 597-amino-acid chain; its full sequence is Elongation factor 4 (597 aa).

The region spanning 4–181 is the tr-type G domain; sequence SKIRNFSIIA…EIVDKISYPI (178 aa). GTP is bound by residues 16–21 and 128–131; these read DHGKST and NKID.

The protein belongs to the TRAFAC class translation factor GTPase superfamily. Classic translation factor GTPase family. LepA subfamily.

Its subcellular location is the cell membrane. The enzyme catalyses GTP + H2O = GDP + phosphate + H(+). In terms of biological role, required for accurate and efficient protein synthesis under certain stress conditions. May act as a fidelity factor of the translation reaction, by catalyzing a one-codon backward translocation of tRNAs on improperly translocated ribosomes. Back-translocation proceeds from a post-translocation (POST) complex to a pre-translocation (PRE) complex, thus giving elongation factor G a second chance to translocate the tRNAs correctly. Binds to ribosomes in a GTP-dependent manner. The sequence is that of Elongation factor 4 from Mycoplasmopsis pulmonis (strain UAB CTIP) (Mycoplasma pulmonis).